The following is a 492-amino-acid chain: SH2 domain-containing adapter protein E (492 aa).

Disordered regions lie at residues 46–193 (TASE…DKAK), 214–236 (KRTKGQRDAERVGENDGYMEPYD), 260–332 (LDGP…EQPW), and 347–384 (FEGSDRPPGREDAGRPHHWQKTLKPTLSDHGDGEKVDP). Position 103 is a phosphoserine (Ser103). Basic and acidic residues predominate over residues 149 to 158 (IKVDTQEKNG). Positions 168–184 (TSSSSSSSSSASSSPSS) are enriched in low complexity. Composition is skewed to basic and acidic residues over residues 214 to 227 (KRTKGQRDAERVGE), 268 to 285 (ETVKVEATAKRRSSKDLL), 306 to 332 (AEVKTRPADSRLPEEDDRPAAEYEQPW), 349 to 361 (GSDRPPGREDAGR), and 373 to 383 (LSDHGDGEKVD). Residues 393 to 488 (WYHGSISRAE…AEHMTLLHPV (96 aa)) enclose the SH2 domain.

Expressed in heart, brain, lung and skeletal muscle.

This chain is SH2 domain-containing adapter protein E (She), found in Mus musculus (Mouse).